Here is a 59-residue protein sequence, read N- to C-terminus: ATP synthase protein 8 (59 aa).

Residues 7–23 (LSPPFLYFELIGHFQVE) form a helical membrane-spanning segment.

This sequence belongs to the ATPase protein 8 family. F-type ATPases have 2 components, CF(1) - the catalytic core - and CF(0) - the membrane proton channel.

It localises to the mitochondrion membrane. Functionally, mitochondrial membrane ATP synthase (F(1)F(0) ATP synthase or Complex V) produces ATP from ADP in the presence of a proton gradient across the membrane which is generated by electron transport complexes of the respiratory chain. F-type ATPases consist of two structural domains, F(1) - containing the extramembraneous catalytic core and F(0) - containing the membrane proton channel, linked together by a central stalk and a peripheral stalk. During catalysis, ATP synthesis in the catalytic domain of F(1) is coupled via a rotary mechanism of the central stalk subunits to proton translocation. Part of the complex F(0) domain. Minor subunit located with subunit a in the membrane. The polypeptide is ATP synthase protein 8 (MT-ATP8) (Oenothera berteroana (Bertero's evening primrose)).